A 496-amino-acid chain; its full sequence is ADP-dependent glucokinase (496 aa).

Residues 1–22 (MALWRGSACAGFLALAVGCVFL) form the signal peptide. One can recognise an ADPK domain in the interval 52-496 (SPESRLAAAW…GLFYSEARPD (445 aa)). Mg(2+) contacts are provided by Glu-297, Glu-328, and Asp-481. Asp-481 serves as the catalytic Proton acceptor.

This sequence belongs to the ADP-dependent glucokinase family. In terms of assembly, monomer. The cofactor is Mg(2+).

It is found in the secreted. It carries out the reaction D-glucose + ADP = D-glucose 6-phosphate + AMP + H(+). Its pathway is carbohydrate degradation; glycolysis. Its function is as follows. Catalyzes the phosphorylation of D-glucose to D-glucose 6-phosphate using ADP as the phosphate donor. GDP and CDP can replace ADP, but with reduced efficiency. This Mus musculus (Mouse) protein is ADP-dependent glucokinase (Adpgk).